A 192-amino-acid chain; its full sequence is Pterin-4-alpha-carbinolamine dehydratase (192 aa).

This sequence belongs to the pterin-4-alpha-carbinolamine dehydratase family.

The catalysed reaction is (4aS,6R)-4a-hydroxy-L-erythro-5,6,7,8-tetrahydrobiopterin = (6R)-L-erythro-6,7-dihydrobiopterin + H2O. The chain is Pterin-4-alpha-carbinolamine dehydratase (Pcd) from Drosophila melanogaster (Fruit fly).